Here is a 1430-residue protein sequence, read N- to C-terminus: Gag-Pol polyprotein (1430 aa).

G2 carries N-myristoyl glycine; by host lipidation. The segment at 7-31 (VLSGGKLDAWEKIRLRPGGKKKYRL) is interaction with Gp41. An interaction with host CALM1 region spans residues 8–43 (LSGGKLDAWEKIRLRPGGKKKYRLKHLVWASRELER). The interval 12-19 (KLDAWEKI) is interaction with host AP3D1. Residues 14–33 (DAWEKIRLRPGGKKKYRLKH) form an interaction with membrane phosphatidylinositol 4,5-bisphosphate and RNA region. The short motif at 16 to 22 (WEKIRLR) is the Nuclear export signal element. The Nuclear localization signal motif lies at 26–32 (KKKYRLK). Positions 73 to 77 (EELKS) are interaction with membrane phosphatidylinositol 4,5-bisphosphate. Y128 carries the post-translational modification Phosphotyrosine; by host. Residues 185–223 (NTVGGHQAAMQMLKDTINEEAAEWDRLHPTQAGPIPPGQ) form an interaction with human PPIA/CYPA and NUP153 region. The interval 273–359 (YSPVGILDIR…GGPSHKARVL (87 aa)) is dimerization/Multimerization of capsid protein p24. 2 CCHC-type zinc fingers span residues 385–402 (VKCF…NCRA) and 406–423 (KGCW…DCTE). The interval 451 to 474 (VSPASRELQVRGGDNPISEAGAER) is disordered. The interval 484–488 (PQITL) is dimerization of protease. Residues 503-572 (KEALLDTGAD…TPVNIIGRNM (70 aa)) form the Peptidase A2 domain. The active-site For protease activity; shared with dimeric partner is the D508. Dimerization of protease regions lie at residues 532-538 (GIGGFIK) and 571-583 (NMLT…LHFP). A Reverse transcriptase domain is found at 626-816 (EGKISKIGPE…PPFLWMGYEL (191 aa)). Mg(2+) contacts are provided by D692, D767, and D768. Residues 809-817 (FLWMGYELH) form an RT 'primer grip' region. A Tryptophan repeat motif motif is present at residues 980–996 (WDTWWTEYWQATWIPEW). The region spanning 1016-1139 (IVGAETFYVD…VDKLVSAGIR (124 aa)) is the RNase H type-1 domain. Residues D1025, E1060, D1080, and D1131 each coordinate Mg(2+). Residues 1145–1186 (DGIDKAQEEHEKYHNNWRAMASDFNIPAVVAKEIVASCDKCQ) form an Integrase-type zinc finger. Zn(2+) is bound by residues H1154, H1158, C1182, and C1185. Residues 1196–1346 (VDCSPGIWQL…SAGERTIDII (151 aa)) enclose the Integrase catalytic domain. Residues D1206, D1258, and E1294 each contribute to the Mg(2+) site. The integrase-type DNA-binding region spans 1365–1412 (FRVYYRDSRDPVWKGPAKLLWKGEGAVVIQDNSEIKVVPRRKAKIIRD).

Homotrimer; further assembles as hexamers of trimers. Interacts with gp41 (via C-terminus). Interacts with host CALM1; this interaction induces a conformational change in the Matrix protein, triggering exposure of the myristate group. Interacts with host AP3D1; this interaction allows the polyprotein trafficking to multivesicular bodies during virus assembly. Part of the pre-integration complex (PIC) which is composed of viral genome, matrix protein, Vpr and integrase. In terms of assembly, homodimer; the homodimer further multimerizes as homohexamers or homopentamers. Interacts with human PPIA/CYPA; This interaction stabilizes the capsid. Interacts with human NUP153. Interacts with host PDZD8; this interaction stabilizes the capsid. Interacts with monkey TRIM5; this interaction destabilizes the capsid. As to quaternary structure, homodimer, whose active site consists of two apposed aspartic acid residues. Heterodimer of p66 RT and p51 RT (RT p66/p51). Heterodimerization of RT is essential for DNA polymerase activity. The overall folding of the subdomains is similar in p66 RT and p51 RT but the spatial arrangements of the subdomains are dramatically different. In terms of assembly, homotetramer; may further associate as a homohexadecamer. Part of the pre-integration complex (PIC) which is composed of viral genome, matrix protein, Vpr and integrase. Interacts with human SMARCB1/INI1 and human PSIP1/LEDGF isoform 1. Interacts with human KPNA3; this interaction might play a role in nuclear import of the pre-integration complex. Interacts with human NUP153; this interaction might play a role in nuclear import of the pre-integration complex. Requires Mg(2+) as cofactor. In terms of processing, specific enzymatic cleavages by the viral protease yield mature proteins. The protease is released by autocatalytic cleavage. The polyprotein is cleaved during and after budding, this process is termed maturation. Proteolytic cleavage of p66 RT removes the RNase H domain to yield the p51 RT subunit. Nucleocapsid protein p7 might be further cleaved after virus entry. Post-translationally, tyrosine phosphorylated presumably in the virion by a host kinase. Phosphorylation is apparently not a major regulator of membrane association. Phosphorylated possibly by host MAPK1; this phosphorylation is necessary for Pin1-mediated virion uncoating. In terms of processing, methylated by host PRMT6, impairing its function by reducing RNA annealing and the initiation of reverse transcription.

The protein localises to the host cell membrane. It localises to the host endosome. The protein resides in the host multivesicular body. It is found in the virion membrane. Its subcellular location is the host nucleus. The protein localises to the host cytoplasm. It localises to the virion. It carries out the reaction Specific for a P1 residue that is hydrophobic, and P1' variable, but often Pro.. The enzyme catalyses Endohydrolysis of RNA in RNA/DNA hybrids. Three different cleavage modes: 1. sequence-specific internal cleavage of RNA. Human immunodeficiency virus type 1 and Moloney murine leukemia virus enzymes prefer to cleave the RNA strand one nucleotide away from the RNA-DNA junction. 2. RNA 5'-end directed cleavage 13-19 nucleotides from the RNA end. 3. DNA 3'-end directed cleavage 15-20 nucleotides away from the primer terminus.. It catalyses the reaction 3'-end directed exonucleolytic cleavage of viral RNA-DNA hybrid.. The catalysed reaction is DNA(n) + a 2'-deoxyribonucleoside 5'-triphosphate = DNA(n+1) + diphosphate. Its activity is regulated as follows. Protease: The viral protease is inhibited by many synthetic protease inhibitors (PIs), such as amprenavir, atazanavir, indinavir, loprinavir, nelfinavir, ritonavir and saquinavir. Use of protease inhibitors in tritherapy regimens permit more ambitious therapeutic strategies. Reverse transcriptase/ribonuclease H: RT can be inhibited either by nucleoside RT inhibitors (NRTIs) or by non nucleoside RT inhibitors (NNRTIs). NRTIs act as chain terminators, whereas NNRTIs inhibit DNA polymerization by binding a small hydrophobic pocket near the RT active site and inducing an allosteric change in this region. Classical NRTIs are abacavir, adefovir (PMEA), didanosine (ddI), lamivudine (3TC), stavudine (d4T), tenofovir (PMPA), zalcitabine (ddC), and zidovudine (AZT). Classical NNRTIs are atevirdine (BHAP U-87201E), delavirdine, efavirenz (DMP-266), emivirine (I-EBU), and nevirapine (BI-RG-587). The tritherapies used as a basic effective treatment of AIDS associate two NRTIs and one NNRTI. Mediates, with Gag polyprotein, the essential events in virion assembly, including binding the plasma membrane, making the protein-protein interactions necessary to create spherical particles, recruiting the viral Env proteins, and packaging the genomic RNA via direct interactions with the RNA packaging sequence (Psi). Gag-Pol polyprotein may regulate its own translation, by the binding genomic RNA in the 5'-UTR. At low concentration, the polyprotein would promote translation, whereas at high concentration, the polyprotein would encapsidate genomic RNA and then shut off translation. Its function is as follows. Targets the polyprotein to the plasma membrane via a multipartite membrane-binding signal, that includes its myristoylated N-terminus. Matrix protein is part of the pre-integration complex. Implicated in the release from host cell mediated by Vpu. Binds to RNA. In terms of biological role, forms the conical core that encapsulates the genomic RNA-nucleocapsid complex in the virion. Most core are conical, with only 7% tubular. The core is constituted by capsid protein hexamer subunits. The core is disassembled soon after virion entry. Host restriction factors such as TRIM5-alpha or TRIMCyp bind retroviral capsids and cause premature capsid disassembly, leading to blocks in reverse transcription. Capsid restriction by TRIM5 is one of the factors which restricts HIV-1 to the human species. Host PIN1 apparently facilitates the virion uncoating. On the other hand, interactions with PDZD8 or CYPA stabilize the capsid. Functionally, encapsulates and protects viral dimeric unspliced genomic RNA (gRNA). Binds these RNAs through its zinc fingers. Acts as a nucleic acid chaperone which is involved in rearangement of nucleic acid secondary structure during gRNA retrotranscription. Also facilitates template switch leading to recombination. As part of the polyprotein, participates in gRNA dimerization, packaging, tRNA incorporation and virion assembly. Aspartyl protease that mediates proteolytic cleavages of Gag and Gag-Pol polyproteins during or shortly after the release of the virion from the plasma membrane. Cleavages take place as an ordered, step-wise cascade to yield mature proteins. This process is called maturation. Displays maximal activity during the budding process just prior to particle release from the cell. Also cleaves Nef and Vif, probably concomitantly with viral structural proteins on maturation of virus particles. Hydrolyzes host EIF4GI and PABP1 in order to shut off the capped cellular mRNA translation. The resulting inhibition of cellular protein synthesis serves to ensure maximal viral gene expression and to evade host immune response. Also mediates cleavage of host YTHDF3. Mediates cleavage of host CARD8, thereby activating the CARD8 inflammasome, leading to the clearance of latent HIV-1 in patient CD4(+) T-cells after viral reactivation; in contrast, HIV-1 can evade CARD8-sensing when its protease remains inactive in infected cells prior to viral budding. Its function is as follows. Multifunctional enzyme that converts the viral RNA genome into dsDNA in the cytoplasm, shortly after virus entry into the cell. This enzyme displays a DNA polymerase activity that can copy either DNA or RNA templates, and a ribonuclease H (RNase H) activity that cleaves the RNA strand of RNA-DNA heteroduplexes in a partially processive 3' to 5' endonucleasic mode. Conversion of viral genomic RNA into dsDNA requires many steps. A tRNA(3)-Lys binds to the primer-binding site (PBS) situated at the 5'-end of the viral RNA. RT uses the 3' end of the tRNA primer to perform a short round of RNA-dependent minus-strand DNA synthesis. The reading proceeds through the U5 region and ends after the repeated (R) region which is present at both ends of viral RNA. The portion of the RNA-DNA heteroduplex is digested by the RNase H, resulting in a ssDNA product attached to the tRNA primer. This ssDNA/tRNA hybridizes with the identical R region situated at the 3' end of viral RNA. This template exchange, known as minus-strand DNA strong stop transfer, can be either intra- or intermolecular. RT uses the 3' end of this newly synthesized short ssDNA to perform the RNA-dependent minus-strand DNA synthesis of the whole template. RNase H digests the RNA template except for two polypurine tracts (PPTs) situated at the 5'-end and near the center of the genome. It is not clear if both polymerase and RNase H activities are simultaneous. RNase H probably can proceed both in a polymerase-dependent (RNA cut into small fragments by the same RT performing DNA synthesis) and a polymerase-independent mode (cleavage of remaining RNA fragments by free RTs). Secondly, RT performs DNA-directed plus-strand DNA synthesis using the PPTs that have not been removed by RNase H as primers. PPTs and tRNA primers are then removed by RNase H. The 3' and 5' ssDNA PBS regions hybridize to form a circular dsDNA intermediate. Strand displacement synthesis by RT to the PBS and PPT ends produces a blunt ended, linear dsDNA copy of the viral genome that includes long terminal repeats (LTRs) at both ends. In terms of biological role, integrase catalyzes viral DNA integration into the host chromosome, by performing a series of DNA cutting and joining reactions. This enzyme activity takes place after virion entry into a cell and reverse transcription of the RNA genome in dsDNA. The first step in the integration process is 3' processing. This step requires a complex comprising the viral genome, matrix protein, Vpr and integrase. This complex is called the pre-integration complex (PIC). The integrase protein removes 2 nucleotides from each 3' end of the viral DNA, leaving recessed CA OH's at the 3' ends. In the second step, the PIC enters cell nucleus. This process is mediated through integrase and Vpr proteins, and allows the virus to infect a non dividing cell. This ability to enter the nucleus is specific of lentiviruses, other retroviruses cannot and rely on cell division to access cell chromosomes. In the third step, termed strand transfer, the integrase protein joins the previously processed 3' ends to the 5' ends of strands of target cellular DNA at the site of integration. The 5'-ends are produced by integrase-catalyzed staggered cuts, 5 bp apart. A Y-shaped, gapped, recombination intermediate results, with the 5'-ends of the viral DNA strands and the 3' ends of target DNA strands remaining unjoined, flanking a gap of 5 bp. The last step is viral DNA integration into host chromosome. This involves host DNA repair synthesis in which the 5 bp gaps between the unjoined strands are filled in and then ligated. Since this process occurs at both cuts flanking the HIV genome, a 5 bp duplication of host DNA is produced at the ends of HIV-1 integration. Alternatively, Integrase may catalyze the excision of viral DNA just after strand transfer, this is termed disintegration. The polypeptide is Gag-Pol polyprotein (gag-pol) (Homo sapiens (Human)).